Here is a 424-residue protein sequence, read N- to C-terminus: MRTLLPSHTPATVTTAARRRHVIHCAGKRSDSFSINSSSSDWQSSCAILSSKVNSQEQSESLSSNSNGSSSYHVSAVNGHNNGAGVSDLNLVPFNNNQSIQSKKPLSISDLSPAPMHGSNLRVAYQGVPGAYSEAAAGKAYPNCQAIPCDQFEVAFQAVELWIADRAVLPVENSLGGSIHRNYDLLLRHRLHIVGEVQLPVHHCLIALPGVRKEFLTRVISHPQGLAQCEHTLTKLGLNVAREAVDDTAGAAEFIAANNIRDTAAIASARAAEIYGLEILEDGIQDDASNVTRFVMLAREPIIPRTDRPFKTSIVFAHEKGTCVLFKVLSAFAFRNISLTKIESRPNHNVPIRLVDEANVGTAKHFEYMFYIDFEASMAESRAQNALSEVQEFTSFLRVLGSYPMDMTSWSPSSSSSSSSTFSL.

The transit peptide at 1–24 (MRTLLPSHTPATVTTAARRRHVIH) directs the protein to the chloroplast. A compositionally biased stretch (low complexity) spans 57–71 (EQSESLSSNSNGSSS). The interval 57–77 (EQSESLSSNSNGSSSYHVSAV) is disordered. In terms of domain architecture, Prephenate dehydratase spans 122-299 (RVAYQGVPGA…NVTRFVMLAR (178 aa)). Positions 313–404 (SIVFAHEKGT…SFLRVLGSYP (92 aa)) constitute an ACT domain.

As to quaternary structure, may interact with GPA1. In terms of tissue distribution, expressed in roots, leaves, stems, flowers and siliques.

The protein resides in the plastid. Its subcellular location is the chloroplast stroma. The enzyme catalyses L-arogenate + H(+) = L-phenylalanine + CO2 + H2O. Its pathway is amino-acid biosynthesis; L-phenylalanine biosynthesis; L-phenylalanine from L-arogenate: step 1/1. Its function is as follows. Converts the prephenate produced from the shikimate-chorismate pathway into phenylalanine. Together with GCR1 and GPA1, required for blue light-mediated synthesis of phenylpyruvate and subsequently of phenylalanine (Phe), in etiolated seedlings. The sequence is that of Arogenate dehydratase 3, chloroplastic from Arabidopsis thaliana (Mouse-ear cress).